A 204-amino-acid polypeptide reads, in one-letter code: Probable GTP-binding protein EngB (204 aa).

In terms of domain architecture, EngB-type G spans 22-197; sequence GFPEIAFVGR…LAEFDNVLSI (176 aa). GTP contacts are provided by residues 30–37, 57–61, 75–78, 144–147, and 176–178; these read GRSNVGKS, GKTRQ, DLPG, NKVD, and FSA. Residues Ser-37 and Thr-59 each coordinate Mg(2+).

The protein belongs to the TRAFAC class TrmE-Era-EngA-EngB-Septin-like GTPase superfamily. EngB GTPase family. The cofactor is Mg(2+).

Necessary for normal cell division and for the maintenance of normal septation. The polypeptide is Probable GTP-binding protein EngB (Ruminiclostridium cellulolyticum (strain ATCC 35319 / DSM 5812 / JCM 6584 / H10) (Clostridium cellulolyticum)).